The sequence spans 340 residues: Glutaminyl-peptide cyclotransferase (340 aa).

The N-terminal stretch at 1–23 (MAIGSVVFAAAGLLLLLLPPSHQ) is a signal peptide. An N-linked (GlcNAc...) asparagine glycan is attached at N42. Residues R85 and E91 each coordinate alpha-D-mannopyranose. C113 and C136 are disulfide-bonded. Zn(2+) is bound at residue D131. Positions 151 and 155 each coordinate alpha-D-mannopyranose. N-linked (GlcNAc...) asparagine glycosylation is present at N156. E170 acts as the Proton acceptor in catalysis. Residue E171 coordinates Zn(2+). Catalysis depends on D218, which acts as the Proton acceptor. H297 lines the Zn(2+) pocket. L306 contacts alpha-D-mannopyranose.

The protein belongs to the glutaminyl-peptide cyclotransferase family.

Its subcellular location is the secreted. The enzyme catalyses N-terminal L-glutaminyl-[peptide] = N-terminal 5-oxo-L-prolyl-[peptide] + NH4(+). Inhibited by imidazoles (imidazole, benzimidazole, 1-benzylimidazole, 1-methylimidazole, P150/03, N-omega-acetylhistamine and 4-methylimidazole) and cysteamines (cysteamine, N-dimethylcysteamine and N-diethylcysteamine). Partially inhibited by PDB50 1(3,4-dimethoxyphenyl)-3-(3-imidazol-1-ylpropyl)thiourea. Functionally, acts as a glutaminyl-peptide cyclotransferase. Responsible for the biosynthesis of pyroglutamyl peptides. Might be more efficient in the conversion of tri and tetrapeptides in vitro. Might have a relative preference for substrates containing hydrophobic amino acids in vitro. This is Glutaminyl-peptide cyclotransferase from Drosophila melanogaster (Fruit fly).